Consider the following 374-residue polypeptide: DNA replication and repair protein RecF (374 aa).

34–41 (GNNGSGKT) provides a ligand contact to ATP.

It belongs to the RecF family.

The protein localises to the cytoplasm. Functionally, the RecF protein is involved in DNA metabolism; it is required for DNA replication and normal SOS inducibility. RecF binds preferentially to single-stranded, linear DNA. It also seems to bind ATP. This Allorhizobium ampelinum (strain ATCC BAA-846 / DSM 112012 / S4) (Agrobacterium vitis (strain S4)) protein is DNA replication and repair protein RecF.